A 272-amino-acid chain; its full sequence is Shikimate dehydrogenase (NADP(+)) (272 aa).

Shikimate contacts are provided by residues 14 to 16 (SKS) and T61. K65 acts as the Proton acceptor in catalysis. E77 serves as a coordination point for NADP(+). Positions 86 and 102 each coordinate shikimate. NADP(+) is bound by residues 126–130 (GAGGA), 149–154 (NRTVSR), and M213. Y215 lines the shikimate pocket. Residue G237 participates in NADP(+) binding.

Belongs to the shikimate dehydrogenase family. In terms of assembly, homodimer.

The enzyme catalyses shikimate + NADP(+) = 3-dehydroshikimate + NADPH + H(+). The protein operates within metabolic intermediate biosynthesis; chorismate biosynthesis; chorismate from D-erythrose 4-phosphate and phosphoenolpyruvate: step 4/7. In terms of biological role, involved in the biosynthesis of the chorismate, which leads to the biosynthesis of aromatic amino acids. Catalyzes the reversible NADPH linked reduction of 3-dehydroshikimate (DHSA) to yield shikimate (SA). The chain is Shikimate dehydrogenase (NADP(+)) from Escherichia coli O7:K1 (strain IAI39 / ExPEC).